Here is a 364-residue protein sequence, read N- to C-terminus: Probable dual-specificity RNA methyltransferase RlmN (364 aa).

The Proton acceptor role is filled by Glu-107. The Radical SAM core domain maps to 113–346; it reads HEYGNSVCVT…ATIRREQGSD (234 aa). The cysteines at positions 120 and 351 are disulfide-linked. [4Fe-4S] cluster is bound by residues Cys-127, Cys-131, and Cys-134. S-adenosyl-L-methionine contacts are provided by residues 177-178, Ser-209, 232-234, and Asn-308; these read GE and SLH. Cys-351 serves as the catalytic S-methylcysteine intermediate.

It belongs to the radical SAM superfamily. RlmN family. The cofactor is [4Fe-4S] cluster.

It is found in the cytoplasm. It carries out the reaction adenosine(2503) in 23S rRNA + 2 reduced [2Fe-2S]-[ferredoxin] + 2 S-adenosyl-L-methionine = 2-methyladenosine(2503) in 23S rRNA + 5'-deoxyadenosine + L-methionine + 2 oxidized [2Fe-2S]-[ferredoxin] + S-adenosyl-L-homocysteine. It catalyses the reaction adenosine(37) in tRNA + 2 reduced [2Fe-2S]-[ferredoxin] + 2 S-adenosyl-L-methionine = 2-methyladenosine(37) in tRNA + 5'-deoxyadenosine + L-methionine + 2 oxidized [2Fe-2S]-[ferredoxin] + S-adenosyl-L-homocysteine. Its function is as follows. Specifically methylates position 2 of adenine 2503 in 23S rRNA and position 2 of adenine 37 in tRNAs. Confers resistance to some classes of antibiotics. The protein is Probable dual-specificity RNA methyltransferase RlmN of Staphylococcus carnosus (strain TM300).